A 302-amino-acid chain; its full sequence is Protoheme IX farnesyltransferase 1 (302 aa).

A run of 9 helical transmembrane segments spans residues 30–50 (VVALMLLTVLVGMCLALPGAV), 52–72 (LQPLIFGLLGIGMMAGAAAAF), 102–122 (ALTFSISLAVLGFVLLYTLVN), 124–144 (LTAWLTFASLLGYAVVYTAYL), 152–172 (IVVGGLAGAMPPLLGWTSVTG), 178–198 (ALLLVIIIFAWTPPHFWALAI), 224–244 (CILLYTILLAIACLLPVLVGM), 245–265 (CGPLYLVGSTLLSCGFIYKSW), and 282–302 (FSIYHLMLLFIVLLVDHYLWV).

It belongs to the UbiA prenyltransferase family. Protoheme IX farnesyltransferase subfamily.

The protein resides in the cell inner membrane. It carries out the reaction heme b + (2E,6E)-farnesyl diphosphate + H2O = Fe(II)-heme o + diphosphate. It participates in porphyrin-containing compound metabolism; heme O biosynthesis; heme O from protoheme: step 1/1. In terms of biological role, converts heme B (protoheme IX) to heme O by substitution of the vinyl group on carbon 2 of heme B porphyrin ring with a hydroxyethyl farnesyl side group. The polypeptide is Protoheme IX farnesyltransferase 1 (Shewanella woodyi (strain ATCC 51908 / MS32)).